Here is a 117-residue protein sequence, read N- to C-terminus: Large ribosomal subunit protein bL20 (117 aa).

The protein belongs to the bacterial ribosomal protein bL20 family.

Binds directly to 23S ribosomal RNA and is necessary for the in vitro assembly process of the 50S ribosomal subunit. It is not involved in the protein synthesizing functions of that subunit. The sequence is that of Large ribosomal subunit protein bL20 from Nitratidesulfovibrio vulgaris (strain DP4) (Desulfovibrio vulgaris).